A 257-amino-acid chain; its full sequence is GTP cyclohydrolase FolE2 (257 aa).

It belongs to the GTP cyclohydrolase IV family.

It carries out the reaction GTP + H2O = 7,8-dihydroneopterin 3'-triphosphate + formate + H(+). Its pathway is cofactor biosynthesis; 7,8-dihydroneopterin triphosphate biosynthesis; 7,8-dihydroneopterin triphosphate from GTP: step 1/1. Functionally, converts GTP to 7,8-dihydroneopterin triphosphate. This chain is GTP cyclohydrolase FolE2, found in Syntrophobacter fumaroxidans (strain DSM 10017 / MPOB).